A 487-amino-acid chain; its full sequence is N-succinylglutamate 5-semialdehyde dehydrogenase (487 aa).

Residue 221–226 (GSSDTG) coordinates NAD(+). Residues E244 and C278 contribute to the active site.

It belongs to the aldehyde dehydrogenase family. AstD subfamily.

It catalyses the reaction N-succinyl-L-glutamate 5-semialdehyde + NAD(+) + H2O = N-succinyl-L-glutamate + NADH + 2 H(+). It participates in amino-acid degradation; L-arginine degradation via AST pathway; L-glutamate and succinate from L-arginine: step 4/5. In terms of biological role, catalyzes the NAD-dependent reduction of succinylglutamate semialdehyde into succinylglutamate. The sequence is that of N-succinylglutamate 5-semialdehyde dehydrogenase from Burkholderia vietnamiensis (strain G4 / LMG 22486) (Burkholderia cepacia (strain R1808)).